The primary structure comprises 1035 residues: FERM domain-containing protein 4B (1035 aa).

The FERM domain occupies R59–K361. Residue S372 is modified to Phosphoserine. Coiled-coil stretches lie at residues Q414–I451 and K535–C559. The necessary for adherens junction and tight junction localization stretch occupies residues V542–Y972. 4 disordered regions span residues P563 to P615, N631 to Q699, F713 to S738, and T754 to Q798. The span at P571–D590 shows a compositional bias: low complexity. Residues D594–P607 are compositionally biased toward polar residues. S609 is modified (phosphoserine). Basic and acidic residues predominate over residues M635–L644. Polar residues-rich tracts occupy residues M664–Q699 and L715–E725. S698 carries the post-translational modification Phosphoserine. Residues R762–S771 show a composition bias toward basic residues. Polar residues predominate over residues V772–N782. A Glycyl lysine isopeptide (Lys-Gly) (interchain with G-Cter in SUMO2) cross-link involves residue K883. Disordered regions lie at residues R906–G926, P939–S958, and P994–V1035. Positions A907–F921 are enriched in polar residues. Residue S916 is modified to Phosphoserine. Low complexity predominate over residues S941–S958. Over residues S1019–V1035 the composition is skewed to basic and acidic residues. K1030 is covalently cross-linked (Glycyl lysine isopeptide (Lys-Gly) (interchain with G-Cter in SUMO2)).

As to quaternary structure, interacts with CYTH3. Interacts with PARD3. Interacts with CYTH1. As to expression, isoform 1 is expressed in the brain. Isoform 2 is expressed in the lung (at protein level).

The protein localises to the cytoplasm. The protein resides in the cytoskeleton. It is found in the cell junction. Its subcellular location is the tight junction. It localises to the adherens junction. In terms of biological role, member of GRP1 signaling complexes that are acutely recruited to plasma membrane ruffles in response to insulin receptor signaling. May function as a scaffolding protein that regulates epithelial cell polarity by connecting ARF6 activation with the PAR3 complex. Plays a redundant role with FRMD4A in epithelial polarization. In Mus musculus (Mouse), this protein is FERM domain-containing protein 4B (Frmd4b).